The sequence spans 125 residues: Large ribosomal subunit protein bL12 (125 aa).

It belongs to the bacterial ribosomal protein bL12 family. Homodimer. Part of the ribosomal stalk of the 50S ribosomal subunit. Forms a multimeric L10(L12)X complex, where L10 forms an elongated spine to which 2 to 4 L12 dimers bind in a sequential fashion. Binds GTP-bound translation factors.

In terms of biological role, forms part of the ribosomal stalk which helps the ribosome interact with GTP-bound translation factors. Is thus essential for accurate translation. This is Large ribosomal subunit protein bL12 from Endomicrobium trichonymphae.